Consider the following 152-residue polypeptide: Superoxide dismutase [Cu-Zn] 2 (152 aa).

2 N-linked (GlcNAc...) asparagine glycosylation sites follow: asparagine 9 and asparagine 33. Cu cation is bound by residues histidine 45, histidine 47, and histidine 62. Cysteine 56 and cysteine 145 form a disulfide bridge. 4 residues coordinate Zn(2+): histidine 62, histidine 70, histidine 79, and aspartate 82. An N-linked (GlcNAc...) asparagine glycan is attached at asparagine 85. Cu cation is bound at residue histidine 119.

It belongs to the Cu-Zn superoxide dismutase family. It depends on Cu cation as a cofactor. Zn(2+) is required as a cofactor. As to expression, expressed in fruits, leaves and pollen grains.

It localises to the cytoplasm. Its subcellular location is the endoplasmic reticulum. It carries out the reaction 2 superoxide + 2 H(+) = H2O2 + O2. Its activity is regulated as follows. Inhibited by KCN and H(2)O(2). In terms of biological role, destroys radicals which are normally produced within the cells and which are toxic to biological systems. Probably involved in the protection against oxidative stress during pollen development. In Olea europaea (Common olive), this protein is Superoxide dismutase [Cu-Zn] 2 (OLE5).